Reading from the N-terminus, the 337-residue chain is MRAVELLLLLGLASMVHGLCSPTVFYRDCWIRRFPGMLLDLEESQRLGAQFLKYYSENTGQKCGRSCCLRKDVSCNVAVFFHDPVHDNVNCLHVHCPTLESCILEPGASAILYNITAGIDPDLLVFEHTSPIYPNSRSSSEWWDRLRILKAMSVGSEGVYPDVMNRMVPSTEAASTTQQDLGANTGISYSRKSTTDVGLRFTSANVSTATKVNMVSPSTDFTHSPGNKTISPFFGPTDTRVSQVPSRSRLNISKPSVNKTKGSHSRNHSSENEEPWDGAPASAGVWLACVTLGAAVISLCCRVVLGTSRCCGKRQGWSHMGQRSASGCRRNTLKENS.

The N-terminal stretch at 1–18 (MRAVELLLLLGLASMVHG) is a signal peptide. Over 19–278 (LCSPTVFYRD…SSENEEPWDG (260 aa)) the chain is Extracellular. One can recognise an MANSC domain in the interval 33–113 (RFPGMLLDLE…LEPGASAILY (81 aa)). N114, N227, and N251 each carry an N-linked (GlcNAc...) asparagine glycan. Polar residues-rich tracts occupy residues 216-230 (SPST…NKTI) and 239-260 (TRVS…VNKT). The interval 216–277 (SPSTDFTHSP…HSSENEEPWD (62 aa)) is disordered. Residues 279–299 (APASAGVWLACVTLGAAVISL) form a helical membrane-spanning segment. At 300 to 337 (CCRVVLGTSRCCGKRQGWSHMGQRSASGCRRNTLKENS) the chain is on the cytoplasmic side. A disordered region spans residues 314 to 337 (RQGWSHMGQRSASGCRRNTLKENS).

It is found in the membrane. The chain is MANSC domain-containing protein 4 (Mansc4) from Mus musculus (Mouse).